We begin with the raw amino-acid sequence, 379 residues long: Pentatricopeptide repeat-containing protein At3g25210, mitochondrial (379 aa).

PPR repeat units lie at residues 142–177 (SVPL…DDSK), 179–221 (DLET…GVIP), 222–256 (DTFV…GSEP), 257–291 (NAYT…GMVP), 292–326 (NGSC…SLSP), and 327–361 (DMLT…DPVM).

The protein belongs to the PPR family. P subfamily.

It is found in the mitochondrion. This Arabidopsis thaliana (Mouse-ear cress) protein is Pentatricopeptide repeat-containing protein At3g25210, mitochondrial.